We begin with the raw amino-acid sequence, 392 residues long: Alkaline phosphatase L (392 aa).

The first 23 residues, 1 to 23 (MYKRSLIAASLSVAALVSAQAMA), serve as a signal peptide directing secretion.

This sequence belongs to the PstS family. In terms of assembly, homodimer.

It is found in the secreted. The protein localises to the periplasm. The catalysed reaction is a phosphate monoester + H2O = an alcohol + phosphate. Has both a phosphomonoesterase and phosphodiesterase activity. This chain is Alkaline phosphatase L, found in Pseudomonas aeruginosa (strain UCBPP-PA14).